The following is an 898-amino-acid chain: Eukaryotic translation initiation factor 3 subunit C (898 aa).

Positions 1–10 are enriched in basic and acidic residues; it reads MSRFFHAKED. 2 disordered regions span residues 1–38 and 162–238; these read MSRF…DDLD and VTDY…SVTK. Acidic residues predominate over residues 11 to 23; the sequence is SDSDTSSSEDEVE. Residues 24-37 show a composition bias toward basic and acidic residues; the sequence is DQKVNKSAKFRDDL. A compositionally biased stretch (acidic residues) spans 170–187; the sequence is DEDGYETPEDEDDDDFGE. Residues 189–202 show a composition bias toward basic and acidic residues; that stretch reads SESKAEKSPGKPSE. Acidic residues predominate over residues 209–218; sequence SDSDSDDDDS. The span at 219–228 shows a compositional bias: low complexity; sequence SNWSSEPESN. The PCI domain maps to 630–806; that stretch reads YHMHINVELM…DCLIMHRVEP (177 aa). The segment at 829-898 is disordered; it reads QILEPRTGRG…RRHPQKPRAF (70 aa). 2 stretches are compositionally biased toward basic and acidic residues: residues 850 to 859 and 866 to 878; these read RNERQGDKQK and GERR…DGKR. A compositionally biased stretch (basic residues) spans 888-898; the sequence is QRRHPQKPRAF.

This sequence belongs to the eIF-3 subunit C family. Component of the eukaryotic translation initiation factor 3 (eIF-3) complex.

The protein localises to the cytoplasm. Component of the eukaryotic translation initiation factor 3 (eIF-3) complex, which is involved in protein synthesis of a specialized repertoire of mRNAs and, together with other initiation factors, stimulates binding of mRNA and methionyl-tRNAi to the 40S ribosome. The eIF-3 complex specifically targets and initiates translation of a subset of mRNAs involved in cell proliferation. This Caenorhabditis elegans protein is Eukaryotic translation initiation factor 3 subunit C.